A 60-amino-acid polypeptide reads, in one-letter code: Cytotoxin 1 (60 aa).

Intrachain disulfides connect Cys3–Cys21, Cys14–Cys38, Cys42–Cys53, and Cys54–Cys59.

It belongs to the three-finger toxin family. Short-chain subfamily. Type IA cytotoxin sub-subfamily. Monomer in solution; Homodimer and oligomer in the presence of negatively charged lipids forming a pore with a size ranging between 20 and 30 Angstroms. As to expression, expressed by the venom gland.

The protein localises to the secreted. It is found in the target cell membrane. Shows cytolytic activity on many different cells by forming pore in lipid membranes. In vivo, increases heart rate or kills the animal by cardiac arrest. In addition, it binds to heparin with high affinity, interacts with Kv channel-interacting protein 1 (KCNIP1) in a calcium-independent manner, and binds to integrin alpha-V/beta-3 (ITGAV/ITGB3) with moderate affinity. In Naja nivea (Cape cobra), this protein is Cytotoxin 1.